The sequence spans 147 residues: Hemoglobin subunit epsilon (147 aa).

The 145-residue stretch at 3–147 (HFTAEEKAAI…VAIALGHKYH (145 aa)) folds into the Globin domain. S14 and S51 each carry phosphoserine. Heme b is bound by residues H64 and H93.

This sequence belongs to the globin family. As to quaternary structure, heterotetramer of two alpha chains and two epsilon chains in early embryonic hemoglobin Gower-2; two zeta chains and two epsilon chains in early embryonic hemoglobin Gower-1. As to expression, red blood cells.

Functionally, the epsilon chain is a beta-type chain of early mammalian embryonic hemoglobin. The chain is Hemoglobin subunit epsilon (HBE1) from Pithecia irrorata (Gray monk saki).